The primary structure comprises 431 residues: Phosphoribosylamine--glycine ligase (431 aa).

Residues lysine 109 to aspartate 316 form the ATP-grasp domain. Residue valine 135–serine 196 coordinates ATP. Glutamate 286 and asparagine 288 together coordinate Mg(2+).

The protein belongs to the GARS family. The cofactor is Mg(2+). Mn(2+) serves as cofactor.

It carries out the reaction 5-phospho-beta-D-ribosylamine + glycine + ATP = N(1)-(5-phospho-beta-D-ribosyl)glycinamide + ADP + phosphate + H(+). The protein operates within purine metabolism; IMP biosynthesis via de novo pathway; N(1)-(5-phospho-D-ribosyl)glycinamide from 5-phospho-alpha-D-ribose 1-diphosphate: step 2/2. The chain is Phosphoribosylamine--glycine ligase from Xanthomonas campestris pv. campestris (strain ATCC 33913 / DSM 3586 / NCPPB 528 / LMG 568 / P 25).